Here is a 231-residue protein sequence, read N- to C-terminus: Putative 3-methyladenine DNA glycosylase (231 aa).

The protein belongs to the DNA glycosylase MPG family.

The protein is Putative 3-methyladenine DNA glycosylase of Pseudomonas fluorescens (strain Pf0-1).